We begin with the raw amino-acid sequence, 101 residues long: ATP synthase subunit c (101 aa).

Transmembrane regions (helical) follow at residues 35-55 (IGAG…GLIG) and 81-101 (GISE…IFVV).

The protein belongs to the ATPase C chain family. In terms of assembly, F-type ATPases have 2 components, F(1) - the catalytic core - and F(0) - the membrane proton channel. F(1) has five subunits: alpha(3), beta(3), gamma(1), delta(1), epsilon(1). F(0) has three main subunits: a(1), b(2) and c(10-14). The alpha and beta chains form an alternating ring which encloses part of the gamma chain. F(1) is attached to F(0) by a central stalk formed by the gamma and epsilon chains, while a peripheral stalk is formed by the delta and b chains.

The protein localises to the cell membrane. F(1)F(0) ATP synthase produces ATP from ADP in the presence of a proton or sodium gradient. F-type ATPases consist of two structural domains, F(1) containing the extramembraneous catalytic core and F(0) containing the membrane proton channel, linked together by a central stalk and a peripheral stalk. During catalysis, ATP synthesis in the catalytic domain of F(1) is coupled via a rotary mechanism of the central stalk subunits to proton translocation. In terms of biological role, key component of the F(0) channel; it plays a direct role in translocation across the membrane. A homomeric c-ring of between 10-14 subunits forms the central stalk rotor element with the F(1) delta and epsilon subunits. The sequence is that of ATP synthase subunit c from Mycoplasma capricolum subsp. capricolum (strain California kid / ATCC 27343 / NCTC 10154).